The primary structure comprises 373 residues: Queuine tRNA-ribosyltransferase (373 aa).

The Proton acceptor role is filled by Asp90. Substrate-binding positions include 90 to 94, Asp144, Gln193, and Gly220; that span reads DSGGF. The tract at residues 251–257 is RNA binding; that stretch reads GVGTPED. The Nucleophile role is filled by Asp270. An RNA binding; important for wobble base 34 recognition region spans residues 275 to 279; that stretch reads TRNAR. Zn(2+) contacts are provided by Cys308, Cys310, Cys313, and His339.

This sequence belongs to the queuine tRNA-ribosyltransferase family. Homodimer. Within each dimer, one monomer is responsible for RNA recognition and catalysis, while the other monomer binds to the replacement base PreQ1. Zn(2+) is required as a cofactor.

It catalyses the reaction 7-aminomethyl-7-carbaguanine + guanosine(34) in tRNA = 7-aminomethyl-7-carbaguanosine(34) in tRNA + guanine. Its pathway is tRNA modification; tRNA-queuosine biosynthesis. In terms of biological role, catalyzes the base-exchange of a guanine (G) residue with the queuine precursor 7-aminomethyl-7-deazaguanine (PreQ1) at position 34 (anticodon wobble position) in tRNAs with GU(N) anticodons (tRNA-Asp, -Asn, -His and -Tyr). Catalysis occurs through a double-displacement mechanism. The nucleophile active site attacks the C1' of nucleotide 34 to detach the guanine base from the RNA, forming a covalent enzyme-RNA intermediate. The proton acceptor active site deprotonates the incoming PreQ1, allowing a nucleophilic attack on the C1' of the ribose to form the product. After dissociation, two additional enzymatic reactions on the tRNA convert PreQ1 to queuine (Q), resulting in the hypermodified nucleoside queuosine (7-(((4,5-cis-dihydroxy-2-cyclopenten-1-yl)amino)methyl)-7-deazaguanosine). The protein is Queuine tRNA-ribosyltransferase of Campylobacter lari (strain RM2100 / D67 / ATCC BAA-1060).